A 423-amino-acid chain; its full sequence is Gamma-glutamyl phosphate reductase (423 aa).

This sequence belongs to the gamma-glutamyl phosphate reductase family.

The protein localises to the cytoplasm. The enzyme catalyses L-glutamate 5-semialdehyde + phosphate + NADP(+) = L-glutamyl 5-phosphate + NADPH + H(+). The protein operates within amino-acid biosynthesis; L-proline biosynthesis; L-glutamate 5-semialdehyde from L-glutamate: step 2/2. Catalyzes the NADPH-dependent reduction of L-glutamate 5-phosphate into L-glutamate 5-semialdehyde and phosphate. The product spontaneously undergoes cyclization to form 1-pyrroline-5-carboxylate. The protein is Gamma-glutamyl phosphate reductase of Pseudomonas putida (strain W619).